Consider the following 690-residue polypeptide: NF-kappa-B-repressing factor (690 aa).

The tract at residues 1–296 (MEKILHMAEG…FKHIIGEDLV (296 aa)) is active repression domain. The short motif at 25–45 (KPSKGQKRYLSTYDGQNPPKK) is the Nuclear localization signal element. Disordered regions lie at residues 27–49 (SKGQ…QAGS), 65–85 (SSSK…DVNG), and 133–160 (YFDS…PPSQ). Residue lysine 68 forms a Glycyl lysine isopeptide (Lys-Gly) (interchain with G-Cter in SUMO2) linkage. The span at 139-150 (PAPSSTSQQANC) shows a compositional bias: polar residues. A DNA-binding region spans residues 296–388 (VVCQIGMLSY…RVFLQDHCLA (93 aa)). A compositionally biased stretch (polar residues) spans 414 to 425 (PTYPSVKSSQCH). The disordered stretch occupies residues 414–436 (PTYPSVKSSQCHSGSSPKGSGKK). Residue lysine 500 forms a Glycyl lysine isopeptide (Lys-Gly) (interchain with G-Cter in SUMO2) linkage. One can recognise a G-patch domain in the interval 551-596 (EDNIGNQLLRKMGWTGGGLGKSGEGIREPISVKEQHKREGLGLDVE). The R3H domain occupies 600–664 (KIAKRDIEQI…DRYLVVGRKR (65 aa)). Serine 618 is modified (phosphoserine). Residues lysine 666 and lysine 674 each participate in a glycyl lysine isopeptide (Lys-Gly) (interchain with G-Cter in SUMO2) cross-link.

As to quaternary structure, interacts with NF-kappa-B. Interacts with XRN2. Interacts (via G-patch domain) with DHX15; promoting the RNA helicase activity of DHX15.

The protein localises to the nucleus. It is found in the nucleolus. Its function is as follows. Enhances the ATPase activity of DHX15 by acting like a brace that tethers mobile sections of DHX15 together, stabilizing a functional conformation with high RNA affinity of DHX15. Involved in the constitutive silencing of the interferon beta promoter, independently of the virus-induced signals, and in the inhibition of the basal and cytokine-induced iNOS promoter activity. Also involved in the regulation of IL-8 transcription. May also act as a DNA-binding transcription regulator: interacts with a specific negative regulatory element (NRE) 5'-AATTCCTCTGA-3' to mediate transcriptional repression of certain NK-kappa-B responsive genes. The protein is NF-kappa-B-repressing factor (Nkrf) of Mus musculus (Mouse).